We begin with the raw amino-acid sequence, 874 residues long: Alanine--tRNA ligase (874 aa).

Zn(2+)-binding residues include histidine 562, histidine 566, cysteine 664, and histidine 668.

This sequence belongs to the class-II aminoacyl-tRNA synthetase family. The cofactor is Zn(2+).

It is found in the cytoplasm. The enzyme catalyses tRNA(Ala) + L-alanine + ATP = L-alanyl-tRNA(Ala) + AMP + diphosphate. In terms of biological role, catalyzes the attachment of alanine to tRNA(Ala) in a two-step reaction: alanine is first activated by ATP to form Ala-AMP and then transferred to the acceptor end of tRNA(Ala). Also edits incorrectly charged Ser-tRNA(Ala) and Gly-tRNA(Ala) via its editing domain. The protein is Alanine--tRNA ligase of Shewanella oneidensis (strain ATCC 700550 / JCM 31522 / CIP 106686 / LMG 19005 / NCIMB 14063 / MR-1).